Reading from the N-terminus, the 509-residue chain is Dihydrolipoyl dehydrogenase, mitochondrial (509 aa).

The transit peptide at 1–35 directs the protein to the mitochondrion; the sequence is MQSWSRVYCTLAKRGHFNRIAHGLQGVSAVPLRTY. Lys-66 carries the post-translational modification N6-acetyllysine; alternate. Position 66 is an N6-succinyllysine; alternate (Lys-66). Residues 71-80 and Lys-89 each bind FAD; that span reads EKNETLGGTC. A disulfide bond links Cys-80 and Cys-85. 4 positions are modified to N6-acetyllysine; alternate: Lys-104, Lys-122, Lys-132, and Lys-143. Residues Lys-104, Lys-122, Lys-132, and Lys-143 each carry the N6-succinyllysine; alternate modification. Gly-154 is a binding site for FAD. Residues Lys-159 and Lys-166 each carry the N6-succinyllysine modification. FAD is bound at residue 183–185; that stretch reads TGS. Residues 220 to 227 and Glu-243 contribute to the NAD(+) site; that span reads GAGVIGVE. 2 positions are modified to N6-succinyllysine: Lys-273 and Lys-277. Val-278 provides a ligand contact to NAD(+). Residues Ser-285 and Ser-297 each carry the phosphoserine modification. An NAD(+)-binding site is contributed by Gly-314. Lys-346 carries the N6-acetyllysine modification. FAD-binding positions include Asp-355 and 361-364; that span reads MLAH. Lys-410 bears the N6-acetyllysine; alternate mark. Lys-410 carries the post-translational modification N6-succinyllysine; alternate. Lys-417 and Lys-420 each carry N6-acetyllysine. An N6-succinyllysine modification is found at Lys-430. Residue His-487 is the Proton acceptor of the active site. Ser-502 bears the Phosphoserine mark. The residue at position 505 (Lys-505) is an N6-acetyllysine; alternate. Lys-505 is subject to N6-succinyllysine; alternate.

The protein belongs to the class-I pyridine nucleotide-disulfide oxidoreductase family. In terms of assembly, homodimer. Part of the multimeric pyruvate dehydrogenase complex that contains multiple copies of pyruvate dehydrogenase (subunits PDHA (PDHA1 or PDHA2) and PDHB, E1), dihydrolipoamide acetyltransferase (DLAT, E2) and lipoamide dehydrogenase (DLD, E3). These subunits are bound to an inner core composed of about 48 DLAT and 12 PDHX molecules (by non covalent bonds). The 2-oxoglutarate dehydrogenase complex is composed of OGDH (2-oxoglutarate dehydrogenase; E1), DLST (dihydrolipoamide succinyltransferase; E2), DLD (dihydrolipoamide dehydrogenase; E3) and the assembly factor KGD4. It contains multiple copies of the three enzymatic components (E1, E2 and E3). In the nucleus, the 2-oxoglutarate dehydrogenase complex associates with KAT2A. Interacts with PDHX. It depends on FAD as a cofactor. Post-translationally, tyrosine phosphorylated. As to expression, expressed in heart (at protein level).

The protein resides in the mitochondrion matrix. The protein localises to the nucleus. Its subcellular location is the cell projection. It localises to the cilium. It is found in the flagellum. The protein resides in the cytoplasmic vesicle. The protein localises to the secretory vesicle. Its subcellular location is the acrosome. It catalyses the reaction N(6)-[(R)-dihydrolipoyl]-L-lysyl-[protein] + NAD(+) = N(6)-[(R)-lipoyl]-L-lysyl-[protein] + NADH + H(+). Its function is as follows. Lipoamide dehydrogenase is a component of the glycine cleavage system as well as an E3 component of three alpha-ketoacid dehydrogenase complexes (pyruvate-, alpha-ketoglutarate-, and branched-chain amino acid-dehydrogenase complex). The 2-oxoglutarate dehydrogenase complex is mainly active in the mitochondrion. A fraction of the 2-oxoglutarate dehydrogenase complex also localizes in the nucleus and is required for lysine succinylation of histones: associates with KAT2A on chromatin and provides succinyl-CoA to histone succinyltransferase KAT2A. In monomeric form may have additional moonlighting function as serine protease. Involved in the hyperactivation of spermatazoa during capacitation and in the spermatazoal acrosome reaction. This chain is Dihydrolipoyl dehydrogenase, mitochondrial (DLD), found in Sus scrofa (Pig).